We begin with the raw amino-acid sequence, 215 residues long: uncharacterized protein (215 aa).

This is an uncharacterized protein from Ostreid herpesvirus 1 (isolate France) (OsHV-1).